A 626-amino-acid chain; its full sequence is Chaperone protein HtpG (626 aa).

The segment at 1–329 is a; substrate-binding; sequence MSEETLSFQA…SSDLPLNVSR (329 aa). Residues 330 to 549 form a b region; that stretch reads EMLQDDPRLR…EGAMSLHLQK (220 aa). The segment at 550 to 626 is c; sequence LLRQANQGSE…LTEVMGKGLI (77 aa).

The protein belongs to the heat shock protein 90 family. Homodimer.

It is found in the cytoplasm. In terms of biological role, molecular chaperone. Has ATPase activity. The sequence is that of Chaperone protein HtpG from Rhodospirillum rubrum (strain ATCC 11170 / ATH 1.1.1 / DSM 467 / LMG 4362 / NCIMB 8255 / S1).